We begin with the raw amino-acid sequence, 3483 residues long: Nonribosomal peptide synthetase Ao415 (3483 aa).

Residues 281-669 (TFKKLNETSN…DVHPLIKDVV (389 aa)) form an adenylation 1 region. Residues 775–851 (EVFDELSTKI…GLRDHVSGKK (77 aa)) form the Carrier 1 domain. Residue Ser812 is modified to O-(pantetheine 4'-phosphoryl)serine. The interval 886 to 1297 (ANVLPCSPMQ…YCLLHMLQNQ (412 aa)) is condensation 1. The tract at residues 1363–1758 (TYRQFDDMGN…SADKDVAEIV (396 aa)) is adenylation 2. Residues 1865-1941 (EELSETEKVI…SLAKALSSAN (77 aa)) form the Carrier 2 domain. At Ser1901 the chain carries O-(pantetheine 4'-phosphoryl)serine. The segment at 1981 to 2379 (IKPCTPLQEG…LLKNPEQEVA (399 aa)) is condensation 2. The Carrier 3 domain maps to 2412–2485 (TEAAVSIRRE…RMVVYLSSTK (74 aa)). The residue at position 2446 (Ser2446) is an O-(pantetheine 4'-phosphoryl)serine. The condensation 3 stretch occupies residues 2520–2917 (ESILPTTPLQ…MLQKIIGNPL (398 aa)). A Carrier 4 domain is found at 2954–3030 (DNYQNLERQV…KICLFLDKKQ (77 aa)). Ser2991 is subject to O-(pantetheine 4'-phosphoryl)serine. A condensation 4 region spans residues 3084–3368 (SEGRIFLPTF…VQEDLLKIST (285 aa)).

This sequence belongs to the NRP synthetase family.

The protein operates within siderophore biosynthesis. Functionally, nonribosomal peptide synthetase; part of the gene cluster that mediates the biosynthesis of desferriferrichrome that chelates Fe(3+) to form ferrichrome. Fe(3+) is a key factor for induction of trap formation and the fungus uses the iron chelating desferriferrichrome to sequester Fe(3+) to inhibit trap formation and increase nematicidal activity. The biosynthesis of desferriferrichrome requires the action of the L-ornithine N(5)-oxygenase (LOO) Ao414 that hydroxylates L-ornithine at N(5), resulting in the formation of N(5)-hydroxyl-L-ornithine, which is subsequently N-acetylated to yield N(5)-acetyl-N(5)-hydroxy-L-ornithine (L-AHO). L-AHO harbors one hydroxamate moiety, which is the key core responsible for chelating iron. Then, L-AHO is further condensated with glycines to form desferriferrichrome through the NRPS protein Ao415. This chain is Nonribosomal peptide synthetase Ao415, found in Arthrobotrys oligospora (strain ATCC 24927 / CBS 115.81 / DSM 1491) (Nematode-trapping fungus).